We begin with the raw amino-acid sequence, 197 residues long: Recombination protein RecR (197 aa).

The C4-type zinc-finger motif lies at 54–69; that stretch reads CQQCNNYTEQTLCTLC. Positions 77 to 172 constitute a Toprim domain; it reads TLLCVVESPA…NISQLAHGIP (96 aa).

It belongs to the RecR family.

Functionally, may play a role in DNA repair. It seems to be involved in an RecBC-independent recombinational process of DNA repair. It may act with RecF and RecO. This is Recombination protein RecR from Legionella pneumophila (strain Paris).